The primary structure comprises 314 residues: Homoserine O-acetyltransferase (314 aa).

The Acyl-thioester intermediate role is filled by cysteine 142. Substrate contacts are provided by lysine 163 and serine 192. Catalysis depends on histidine 235, which acts as the Proton acceptor. The active site involves glutamate 237. Arginine 249 is a substrate binding site.

Belongs to the MetA family.

It localises to the cytoplasm. It carries out the reaction L-homoserine + acetyl-CoA = O-acetyl-L-homoserine + CoA. Its pathway is amino-acid biosynthesis; L-methionine biosynthesis via de novo pathway; O-acetyl-L-homoserine from L-homoserine: step 1/1. Its function is as follows. Transfers an acetyl group from acetyl-CoA to L-homoserine, forming acetyl-L-homoserine. In Streptococcus mutans serotype c (strain ATCC 700610 / UA159), this protein is Homoserine O-acetyltransferase.